A 214-amino-acid chain; its full sequence is Ribosomal RNA small subunit methyltransferase G (214 aa).

S-adenosyl-L-methionine-binding positions include glycine 78, leucine 83, 129 to 130 (AE), and arginine 144.

The protein belongs to the methyltransferase superfamily. RNA methyltransferase RsmG family.

Its subcellular location is the cytoplasm. The enzyme catalyses guanosine(527) in 16S rRNA + S-adenosyl-L-methionine = N(7)-methylguanosine(527) in 16S rRNA + S-adenosyl-L-homocysteine. Functionally, specifically methylates the N7 position of guanine in position 527 of 16S rRNA. The protein is Ribosomal RNA small subunit methyltransferase G of Marinobacter nauticus (strain ATCC 700491 / DSM 11845 / VT8) (Marinobacter aquaeolei).